The primary structure comprises 368 residues: Homoserine O-acetyltransferase (368 aa).

Residues 44 to 350 (NAILVAHAWT…AYGHDAFLLE (307 aa)) enclose the AB hydrolase-1 domain. Serine 150 functions as the Nucleophile in the catalytic mechanism. A substrate-binding site is contributed by arginine 217. Active-site residues include aspartate 311 and histidine 344. Aspartate 345 serves as a coordination point for substrate.

This sequence belongs to the AB hydrolase superfamily. MetX family. Homodimer.

It localises to the cytoplasm. The catalysed reaction is L-homoserine + acetyl-CoA = O-acetyl-L-homoserine + CoA. It participates in amino-acid biosynthesis; L-methionine biosynthesis via de novo pathway; O-acetyl-L-homoserine from L-homoserine: step 1/1. In terms of biological role, transfers an acetyl group from acetyl-CoA to L-homoserine, forming acetyl-L-homoserine. The protein is Homoserine O-acetyltransferase of Geobacter sulfurreducens (strain ATCC 51573 / DSM 12127 / PCA).